Here is a 160-residue protein sequence, read N- to C-terminus: NADH-quinone oxidoreductase subunit B (160 aa).

Cysteine 37, cysteine 38, cysteine 102, and cysteine 132 together coordinate [4Fe-4S] cluster.

This sequence belongs to the complex I 20 kDa subunit family. NDH-1 is composed of 14 different subunits. Subunits NuoB, C, D, E, F, and G constitute the peripheral sector of the complex. It depends on [4Fe-4S] cluster as a cofactor.

It is found in the cell inner membrane. It catalyses the reaction a quinone + NADH + 5 H(+)(in) = a quinol + NAD(+) + 4 H(+)(out). Functionally, NDH-1 shuttles electrons from NADH, via FMN and iron-sulfur (Fe-S) centers, to quinones in the respiratory chain. Couples the redox reaction to proton translocation (for every two electrons transferred, four hydrogen ions are translocated across the cytoplasmic membrane), and thus conserves the redox energy in a proton gradient. In Neisseria gonorrhoeae (strain ATCC 700825 / FA 1090), this protein is NADH-quinone oxidoreductase subunit B.